Consider the following 431-residue polypeptide: 3'3'-cGAMP-specific phosphodiesterase 1 (431 aa).

One can recognise an HD domain in the interval 39 to 155 (DINHGHRVGY…IFLADRVDYL (117 aa)). An HD-GYP domain is found at 231-427 (GVEEIMSIAM…YYQLSIAESP (197 aa)). A divalent metal cation-binding residues include His288 and Asp289. Lys292 acts as the Proton donor in catalysis. A divalent metal cation-binding residues include His317, His341, His342, and Asp370.

Monomer. It depends on Ca(2+) as a cofactor. Mg(2+) is required as a cofactor.

It carries out the reaction 3',3'-cGAMP + H2O = 5'-pApG-3' + H(+). It catalyses the reaction 5'-pApG-3' + H2O = 5'-ApG-3' + phosphate. Its function is as follows. Phosphodiesterase (PDE) that catalyzes the hydrolysis of 3'3'-cyclic GMP-AMP (3'3'-cGAMP), leading to linear 5'-pApG. Also displays 5'-nucleotidase activity, further hydrolyzing 5'-pApG to 5'-ApG. Counteracts the function of the 3'3'-cGAMP synthase DncV, and is involved in the modulation of intracellular 3'3'-cGAMP levels. Enhances bacterial chemotaxis and inhibits intestinal colonization in vivo. Thus exerts a crucial role in regulating bacterial infectivity through catalyzing 3'3'-cGAMP degradation. Is specific for 3'3'-cGAMP since it cannot degrade other cGAMP linkage isomers (3'2'-, 2'3'-, and 2'2'-cGAMPs). Is also able to hydrolyze c-di-GMP but not c-di-AMP. The polypeptide is 3'3'-cGAMP-specific phosphodiesterase 1 (Vibrio cholerae serotype O1 (strain ATCC 39315 / El Tor Inaba N16961)).